The chain runs to 380 residues: MLLSIGMLMLSATQVYTILTVQLFAFLNLLPVEADILAYNFENASQTFDDLPARFGYRLPAEGLKGFLINSKPENACEPIVPPPVRDNSSGTFIVLIRRLDCNFDEKVLNAQRAGYKAAIVHNVDSDDLISMGSNDIEVLKKIDIPSVFIGESSANSLKDEFTYEKGGHIILVPEFSLPLEYYLIPFLIIVGICLILIVIFMITKFVQDRHRARRNRLRKDQLKKLPVHKFKKGDEYDVCAICLDEYEDGDKLRILPCSHAYHCKCVDPWLTKTKKTCPVCKQKVVPSQGDSDSDTDSSQEENEVSEHTPLLRPLASASTQSFGALSESRSHQNMTESSDYEEDDNDTDSSDAENEINEHSVVVQLQPNGERDYNIANTV.

A signal peptide spans 1–34; it reads MLLSIGMLMLSATQVYTILTVQLFAFLNLLPVEA. Over 35 to 182 the chain is Lumenal; it reads DILAYNFENA…VPEFSLPLEY (148 aa). The PA domain maps to 65–160; sequence KGFLINSKPE…GESSANSLKD (96 aa). An N-linked (GlcNAc...) asparagine glycan is attached at N88. The chain crosses the membrane as a helical span at residues 183–203; that stretch reads YLIPFLIIVGICLILIVIFMI. Over 204 to 380 the chain is Cytoplasmic; it reads TKFVQDRHRA…ERDYNIANTV (177 aa). The RING-type; atypical zinc finger occupies 240–282; the sequence is CAICLDEYEDGDKLRILPCSHAYHCKCVDPWLTKTKKTCPVCK. The segment at 285–380 is disordered; that stretch reads VVPSQGDSDS…ERDYNIANTV (96 aa). 2 stretches are compositionally biased toward acidic residues: residues 292-304 and 339-356; these read SDSDTDSSQEENE and SDYEEDDNDTDSSDAENE.

In terms of assembly, interacts with ERN1. Autoubiquitinated.

It localises to the endoplasmic reticulum membrane. The protein localises to the late endosome membrane. It is found in the lysosome membrane. The protein resides in the nucleus inner membrane. The catalysed reaction is S-ubiquitinyl-[E2 ubiquitin-conjugating enzyme]-L-cysteine + [acceptor protein]-L-lysine = [E2 ubiquitin-conjugating enzyme]-L-cysteine + N(6)-ubiquitinyl-[acceptor protein]-L-lysine.. Its pathway is protein modification; protein ubiquitination. In terms of biological role, E3 ubiquitin-protein ligase that regulates cell proliferation. Involved in apoptosis regulation. Mediates ER stress-induced activation of JNK signaling pathway and apoptosis by promoting ERN1 activation and splicing of XBP1 mRNA. Also involved in protein trafficking and localization. The sequence is that of E3 ubiquitin-protein ligase RNF13 (RNF13) from Bos taurus (Bovine).